Consider the following 256-residue polypeptide: 3-hydroxy-5-phosphonooxypentane-2,4-dione thiolase (256 aa).

Lys-168 (schiff-base intermediate with substrate) is an active-site residue.

This sequence belongs to the DeoC/FbaB aldolase family. Homodecamer.

The protein resides in the cytoplasm. The enzyme catalyses dihydroxyacetone phosphate + acetyl-CoA = 3-hydroxy-2,4-dioxopentyl phosphate + CoA. Functionally, involved in the degradation of phospho-AI-2, thereby terminating induction of the lsr operon and closing the AI-2 signaling cycle. Catalyzes the transfer of an acetyl moiety from 3-hydroxy-5-phosphonooxypentane-2,4-dione to CoA to form glycerone phosphate and acetyl-CoA. This is 3-hydroxy-5-phosphonooxypentane-2,4-dione thiolase (lsrF) from Shigella flexneri serotype 5b (strain 8401).